Consider the following 373-residue polypeptide: Phospho-N-acetylmuramoyl-pentapeptide-transferase (373 aa).

Helical transmembrane passes span 34–54 (GALF…ISSL), 78–98 (TPTM…LLWA), 100–120 (LANV…AIGF), 141–161 (LGLE…TALS), 181–201 (FMLN…VSAG), 212–232 (GLAI…AYLA), 252–272 (LAVV…FNAP), 275–295 (AIFM…TVAV), 301–321 (IVMA…IIQV), and 350–370 (QVVV…LSTL).

It belongs to the glycosyltransferase 4 family. MraY subfamily. The cofactor is Mg(2+).

The protein localises to the cell inner membrane. The enzyme catalyses UDP-N-acetyl-alpha-D-muramoyl-L-alanyl-gamma-D-glutamyl-meso-2,6-diaminopimeloyl-D-alanyl-D-alanine + di-trans,octa-cis-undecaprenyl phosphate = di-trans,octa-cis-undecaprenyl diphospho-N-acetyl-alpha-D-muramoyl-L-alanyl-D-glutamyl-meso-2,6-diaminopimeloyl-D-alanyl-D-alanine + UMP. It functions in the pathway cell wall biogenesis; peptidoglycan biosynthesis. Catalyzes the initial step of the lipid cycle reactions in the biosynthesis of the cell wall peptidoglycan: transfers peptidoglycan precursor phospho-MurNAc-pentapeptide from UDP-MurNAc-pentapeptide onto the lipid carrier undecaprenyl phosphate, yielding undecaprenyl-pyrophosphoryl-MurNAc-pentapeptide, known as lipid I. This chain is Phospho-N-acetylmuramoyl-pentapeptide-transferase, found in Rhizobium rhizogenes (strain K84 / ATCC BAA-868) (Agrobacterium radiobacter).